Consider the following 275-residue polypeptide: Thiazole synthase (275 aa).

Lys108 serves as the catalytic Schiff-base intermediate with DXP. Residues Gly169, 196-197 (AG), and 218-219 (NT) each bind 1-deoxy-D-xylulose 5-phosphate.

The protein belongs to the ThiG family. In terms of assembly, homotetramer. Forms heterodimers with either ThiH or ThiS.

The protein localises to the cytoplasm. The enzyme catalyses [ThiS sulfur-carrier protein]-C-terminal-Gly-aminoethanethioate + 2-iminoacetate + 1-deoxy-D-xylulose 5-phosphate = [ThiS sulfur-carrier protein]-C-terminal Gly-Gly + 2-[(2R,5Z)-2-carboxy-4-methylthiazol-5(2H)-ylidene]ethyl phosphate + 2 H2O + H(+). The protein operates within cofactor biosynthesis; thiamine diphosphate biosynthesis. In terms of biological role, catalyzes the rearrangement of 1-deoxy-D-xylulose 5-phosphate (DXP) to produce the thiazole phosphate moiety of thiamine. Sulfur is provided by the thiocarboxylate moiety of the carrier protein ThiS. In vitro, sulfur can be provided by H(2)S. The sequence is that of Thiazole synthase from Ralstonia pickettii (strain 12J).